The chain runs to 257 residues: MNPLIIKLGGVLLDSEEALERLFTALVAYRQEHQRPLVIVHGGGCLVDELMKKLSLPVVKKNGLRVTPADQIDIITGALAGSANKTLLSWAKKHDINAVGLCLGDGDSTTVTQLDESLGFVGKAEAGSPALLNTLLSAGYLPVVSSIGITAQGDLMNVNADQAATALAQTLGADLILLSDVSGILDGKGQRIAEMTAEKAEQLIAQGIITDGMIVKVNAALDAARALGRPVDIASWRHAEQLPALFSGVAIGTRILA.

Substrate-binding positions include G43–G44, R65, and N157. ATP-binding positions include D180 to L185 and I208 to T210.

This sequence belongs to the acetylglutamate kinase family. ArgB subfamily. Homodimer.

The protein resides in the cytoplasm. The enzyme catalyses N-acetyl-L-glutamate + ATP = N-acetyl-L-glutamyl 5-phosphate + ADP. It functions in the pathway amino-acid biosynthesis; L-arginine biosynthesis; N(2)-acetyl-L-ornithine from L-glutamate: step 2/4. Functionally, catalyzes the ATP-dependent phosphorylation of N-acetyl-L-glutamate. In Pectobacterium atrosepticum (strain SCRI 1043 / ATCC BAA-672) (Erwinia carotovora subsp. atroseptica), this protein is Acetylglutamate kinase.